Reading from the N-terminus, the 152-residue chain is Large ribosomal subunit protein bL9 (152 aa).

Belongs to the bacterial ribosomal protein bL9 family.

Binds to the 23S rRNA. The sequence is that of Large ribosomal subunit protein bL9 from Rippkaea orientalis (strain PCC 8801 / RF-1) (Cyanothece sp. (strain PCC 8801)).